The following is a 930-amino-acid chain: Type I restriction enzyme SsaAORF53P endonuclease subunit (930 aa).

The Helicase ATP-binding domain occupies 254 to 418 (HQATETSNNG…DGRSTADIFG (165 aa)). 268 to 274 (TTGSGKT) serves as a coordination point for ATP.

Belongs to the HsdR family. As to quaternary structure, the type I restriction/modification system is composed of three polypeptides R, M and S.

It carries out the reaction Endonucleolytic cleavage of DNA to give random double-stranded fragments with terminal 5'-phosphates, ATP is simultaneously hydrolyzed.. Its function is as follows. The restriction (R) subunit of a type I restriction enzyme that recognizes an undetermined sequence and cleaves a random distance away. Subunit R is required for both nuclease and ATPase activities, but not for modification. After locating a non-methylated recognition site, the enzyme complex serves as a molecular motor that translocates DNA in an ATP-dependent manner until a collision occurs that triggers cleavage. This is Type I restriction enzyme SsaAORF53P endonuclease subunit from Staphylococcus saprophyticus subsp. saprophyticus (strain ATCC 15305 / DSM 20229 / NCIMB 8711 / NCTC 7292 / S-41).